Here is a 502-residue protein sequence, read N- to C-terminus: Glycerol kinase (502 aa).

Position 14 (Thr-14) interacts with ADP. ATP is bound by residues Thr-14, Thr-15, and Ser-16. Thr-14 provides a ligand contact to sn-glycerol 3-phosphate. Arg-18 lines the ADP pocket. Sn-glycerol 3-phosphate contacts are provided by Arg-84, Glu-85, Tyr-136, and Asp-246. Glycerol is bound by residues Arg-84, Glu-85, Tyr-136, Asp-246, and Gln-247. Thr-268 and Gly-311 together coordinate ADP. ATP is bound by residues Thr-268, Gly-311, Gln-315, and Gly-412. ADP contacts are provided by Gly-412 and Asn-416.

It belongs to the FGGY kinase family. Homotetramer and homodimer (in equilibrium). Heterodimer with EIIA-Glc. Binds 1 zinc ion per glycerol kinase EIIA-Glc dimer. The zinc ion is important for dimerization.

The catalysed reaction is glycerol + ATP = sn-glycerol 3-phosphate + ADP + H(+). The protein operates within polyol metabolism; glycerol degradation via glycerol kinase pathway; sn-glycerol 3-phosphate from glycerol: step 1/1. Activity of this regulatory enzyme is affected by several metabolites. Allosterically and non-competitively inhibited by fructose 1,6-bisphosphate (FBP) and unphosphorylated phosphocarrier protein EIIA-Glc (III-Glc), an integral component of the bacterial phosphotransferase (PTS) system. In terms of biological role, key enzyme in the regulation of glycerol uptake and metabolism. Catalyzes the phosphorylation of glycerol to yield sn-glycerol 3-phosphate. This is Glycerol kinase from Salmonella heidelberg (strain SL476).